We begin with the raw amino-acid sequence, 114 residues long: Putative ANKRD40 C-terminal-like protein (114 aa).

The chain is Putative ANKRD40 C-terminal-like protein from Homo sapiens (Human).